Reading from the N-terminus, the 513-residue chain is Probable histone deacetylase 19 (513 aa).

Positions 23–334 (RRVCYFYDPD…WCYETGVALG (312 aa)) are histone deacetylase. H154 acts as the Proton donor/acceptor in catalysis. Residues D189, H191, and D277 each contribute to the Zn(2+) site. 2 disordered regions span residues 384–432 (HAPS…ESSR) and 446–513 (ENAT…YHKP). Residues 398–409 (EIPEQDEDQDDP) are compositionally biased toward acidic residues. Basic and acidic residues predominate over residues 410–432 (DERHDPDSDMEVDDHKAVEESSR). Positions 492-504 (NVKNEPESSTKLQ) are enriched in polar residues.

It belongs to the histone deacetylase family. HD type 1 subfamily. The cofactor is Zn(2+).

Its subcellular location is the nucleus. The enzyme catalyses N(6)-acetyl-L-lysyl-[histone] + H2O = L-lysyl-[histone] + acetate. Its function is as follows. Responsible for the deacetylation of lysine residues on the N-terminal part of the core histones (H2A, H2B, H3 and H4). Histone deacetylation gives a tag for epigenetic repression and plays an important role in transcriptional regulation, cell cycle progression and developmental events. Histone deacetylases act via the formation of large multiprotein complexes. This Zea mays (Maize) protein is Probable histone deacetylase 19.